Consider the following 424-residue polypeptide: S-inosyl-L-homocysteine hydrolase (424 aa).

2 residues coordinate substrate: Asp130 and Glu155. 156-158 (TTT) is an NAD(+) binding site. Positions 185 and 189 each coordinate substrate. NAD(+) contacts are provided by residues Asn190, 219-224 (GYGWCG), Glu242, Asn277, 298-300 (AGH), and Asn346.

This sequence belongs to the adenosylhomocysteinase family. NAD(+) serves as cofactor.

The protein resides in the cytoplasm. The enzyme catalyses S-inosyl-L-homocysteine + H2O = L-homocysteine + inosine. It participates in amino-acid biosynthesis; S-adenosyl-L-methionine biosynthesis. Its function is as follows. Catalyzes the hydrolysis of S-inosyl-L-homocysteine (SIH) to L-homocysteine (Hcy) and inosine. Likely functions in a S-adenosyl-L-methionine (SAM) recycling pathway from S-adenosyl-L-homocysteine (SAH) produced from SAM-dependent methylation reactions. Can also catalyze the reverse reaction in vitro, i.e. the synthesis of SIH from Hcy and inosine. The protein is S-inosyl-L-homocysteine hydrolase of Methanopyrus kandleri (strain AV19 / DSM 6324 / JCM 9639 / NBRC 100938).